The following is a 205-amino-acid chain: Methylthioribulose-1-phosphate dehydratase (205 aa).

A substrate-binding site is contributed by C75. Positions 93 and 95 each coordinate Zn(2+). Catalysis depends on E116, which acts as the Proton donor/acceptor. H171 is a binding site for Zn(2+).

This sequence belongs to the aldolase class II family. MtnB subfamily. Zn(2+) serves as cofactor.

Its subcellular location is the cytoplasm. It catalyses the reaction 5-(methylsulfanyl)-D-ribulose 1-phosphate = 5-methylsulfanyl-2,3-dioxopentyl phosphate + H2O. It participates in amino-acid biosynthesis; L-methionine biosynthesis via salvage pathway; L-methionine from S-methyl-5-thio-alpha-D-ribose 1-phosphate: step 2/6. Functionally, catalyzes the dehydration of methylthioribulose-1-phosphate (MTRu-1-P) into 2,3-diketo-5-methylthiopentyl-1-phosphate (DK-MTP-1-P). This Kluyveromyces lactis (strain ATCC 8585 / CBS 2359 / DSM 70799 / NBRC 1267 / NRRL Y-1140 / WM37) (Yeast) protein is Methylthioribulose-1-phosphate dehydratase.